The chain runs to 390 residues: Protein shisa-9 (390 aa).

An N-terminal signal peptide occupies residues 1–22; sequence MTGIRAIFYYFLVDLLTLLCWA. At 23–134 the chain is on the extracellular side; sequence QGKGGQHFGS…DPSHDPTRDK (112 aa). Residues Asn40 and Asn74 are each glycosylated (N-linked (GlcNAc...) asparagine). A helical transmembrane segment spans residues 135-155; it reads TNLIVYIICGVVAVMVLVGIF. Over 156 to 390 the chain is Cytoplasmic; the sequence is TKLGLEKAHR…VTNSKTEVTV (235 aa).

This sequence belongs to the shisa family. SHISA9 subfamily. In terms of assembly, component of some AMPA receptors (ionotropic glutamate receptors) complex.

The protein resides in the cell projection. It is found in the dendritic spine membrane. Its subcellular location is the synapse. Functionally, regulator of short-term neuronal synaptic plasticity in the dentate gyrus. Associates with AMPA receptors (ionotropic glutamate receptors) in synaptic spines and promotes AMPA receptor desensitization at excitatory synapses. This chain is Protein shisa-9 (shisa9), found in Xenopus tropicalis (Western clawed frog).